The chain runs to 392 residues: uncharacterized protein (392 aa).

Positions 7 to 76 (TEYYDLLGIS…RSQYDQFGKE (70 aa)) constitute a J domain. Ser108 bears the Phosphoserine mark.

This is an uncharacterized protein from Schizosaccharomyces pombe (strain 972 / ATCC 24843) (Fission yeast).